We begin with the raw amino-acid sequence, 556 residues long: Glutamine--tRNA ligase (556 aa).

Positions 39-49 (PEPNGYLHIGH) match the 'HIGH' region motif. Residues 40–42 (EPN) and 46–52 (HIGHAKS) contribute to the ATP site. Positions 72 and 217 each coordinate L-glutamine. Residues T236 and 267–268 (RL) contribute to the ATP site. The 'KMSKS' region motif lies at 274–278 (LTSKR).

It belongs to the class-I aminoacyl-tRNA synthetase family. As to quaternary structure, monomer.

It localises to the cytoplasm. The catalysed reaction is tRNA(Gln) + L-glutamine + ATP = L-glutaminyl-tRNA(Gln) + AMP + diphosphate. The polypeptide is Glutamine--tRNA ligase (Haemophilus ducreyi (strain 35000HP / ATCC 700724)).